The chain runs to 384 residues: DNA polymerase IV (384 aa).

Residues 5-182 (IIHVDMDAFF…LPVTKVHGIG (178 aa)) form the UmuC domain. Mg(2+) is bound by residues Asp-9, Met-10, and Asp-103. The active site involves Glu-104.

It belongs to the DNA polymerase type-Y family. Monomer. Mg(2+) is required as a cofactor.

Its subcellular location is the cytoplasm. It carries out the reaction DNA(n) + a 2'-deoxyribonucleoside 5'-triphosphate = DNA(n+1) + diphosphate. Poorly processive, error-prone DNA polymerase involved in translesion repair and untargeted mutagenesis. Copies undamaged DNA at stalled replication forks, which arise in vivo from mismatched or misaligned primer ends. These misaligned primers can be extended by PolIV. Exhibits no 3'-5' exonuclease (proofreading) activity. Involved in translesional synthesis. Primer extension fidelity in vitro is temperature-dependent. Inserts a correct base opposite templating bases at 70 degrees Celsius, but at 37 degrees Celsius in addition to correct base pairing, base transitions, transversions and frameshifts can occur. Preferably forms erroneous base pairs C:T. Bypasses 8-oxo-dG oxidative damage by incorporating dATP or dCTP opposite of the damaged DNA template site at both temperatures in vitro. This is DNA polymerase IV from Caldanaerobacter subterraneus subsp. tengcongensis (strain DSM 15242 / JCM 11007 / NBRC 100824 / MB4) (Thermoanaerobacter tengcongensis).